Here is a 558-residue protein sequence, read N- to C-terminus: MSFKTDAEIAQSSTMRPIGEIAAKLGLNADNIEPYGHYKAKINPAEAFKLPQKQGRLILVTAINPTPAGEGKTTVTIGLADALRHIGKDAVIALREPSLGPVFGVKGGAAGGGYAQVLPMEDINLHFTGDFHAIGAANNLLAAMLDNHIYQGNELNIDPKRVLWRRVVDMNDRQLRNIIDGMGKPVDGVMRPDGFDITVASEVMAVFCLAKDISDLKERLGNILVAYAKDGSPVYAKDLKANGAMAALLKDAIKPNLVQTIEGTPAFVHGGPFANIAHGCNSVTATRLAKHLADYAVTEAGFGADLGAEKFCDIKCRLAGLKPDAAVVVATVRALKYNGGVERANLGEENLDALEKGLPNLLKHISNLKNVFGLPVVVALNRFVSDADAELAMIEKACAEHGVEVSLTEVWGKGGAGGADLARKVVNAIESQTNNFGFAYDVELGIKDKIRAIAQKVYGAEDVDFSAEASAEIASLEKLGLDKMPICMAKTQYSLSDNAKLLGCPEDFRIAVRGITVSAGAGFIVALCGNMMKMPGLPKVPAAEKIDVDAEGVIHGLF.

Residue 66–73 (TPAGEGKT) coordinates ATP.

The protein belongs to the formate--tetrahydrofolate ligase family.

It carries out the reaction (6S)-5,6,7,8-tetrahydrofolate + formate + ATP = (6R)-10-formyltetrahydrofolate + ADP + phosphate. It participates in one-carbon metabolism; tetrahydrofolate interconversion. This is Formate--tetrahydrofolate ligase from Neisseria meningitidis serogroup B (strain ATCC BAA-335 / MC58).